Reading from the N-terminus, the 399-residue chain is MSILYIDEIKDLREKLVFIRVDFNVPQDDNGNITEDTRIVGAVPTIKYAIENGAKVILASHLGRPKGEKKPKYTMAPAARRLSELLGKEVKQATDCFGPDVDAMVAALQPGDVLMLENVRFYPGEEKNDPDFACKLANGCEIYVNDAFAVSHRAHASVHAITKCIPVIAAGFLMKNEMTFFEKAMTRPVRPLAAILGGAKVSGKLEVLETLVGKVDIIIIGGGMAFTFLKARGLSVGKSLVEDDLIDTAKRILDNAAKRGIEFLLPEDCVVADRFAADADCKTVSVNDIPSEWMALDVGPASTARFSDALKEANTVIWNGPMGVFEMDRFAKGTFAIADVVAGLKNATTIIGGGDTDSAVRKAGVADKVSYISTGGGAFLELLEGKKLPGVEVLEQSGK.

Substrate is bound by residues 22–24, Arg-38, 61–64, Arg-120, and Arg-153; these read DFN and HLGR. ATP contacts are provided by residues Lys-204, Glu-326, and 353-356; that span reads GGDT.

This sequence belongs to the phosphoglycerate kinase family. As to quaternary structure, monomer.

The protein resides in the cytoplasm. It carries out the reaction (2R)-3-phosphoglycerate + ATP = (2R)-3-phospho-glyceroyl phosphate + ADP. It participates in carbohydrate degradation; glycolysis; pyruvate from D-glyceraldehyde 3-phosphate: step 2/5. The protein is Phosphoglycerate kinase of Geotalea daltonii (strain DSM 22248 / JCM 15807 / FRC-32) (Geobacter daltonii).